The primary structure comprises 360 residues: sn-glycerol-3-phosphate import ATP-binding protein UgpC (360 aa).

The ABC transporter domain maps to Leu-4 to Ile-235. Residue Gly-37 to Ser-44 coordinates ATP.

Belongs to the ABC transporter superfamily. sn-glycerol-3-phosphate importer (TC 3.A.1.1.3) family. The complex is composed of two ATP-binding proteins (UgpC), two transmembrane proteins (UgpA and UgpE) and a solute-binding protein (UgpB).

It localises to the cell inner membrane. It carries out the reaction sn-glycerol 3-phosphate(out) + ATP + H2O = sn-glycerol 3-phosphate(in) + ADP + phosphate + H(+). In terms of biological role, part of the ABC transporter complex UgpBAEC involved in sn-glycerol-3-phosphate (G3P) import. Responsible for energy coupling to the transport system. The protein is sn-glycerol-3-phosphate import ATP-binding protein UgpC of Burkholderia pseudomallei (strain 1710b).